We begin with the raw amino-acid sequence, 193 residues long: Proteasome subunit beta 1 (193 aa).

A propeptide spans 1 to 4 (removed in mature form; by autocatalysis); that stretch reads MPGA. Threonine 5 acts as the Nucleophile in catalysis.

Belongs to the peptidase T1B family. The 20S proteasome core is composed of 14 alpha and 14 beta subunits that assemble into four stacked heptameric rings, resulting in a barrel-shaped structure. The two inner rings, each composed of seven catalytic beta subunits, are sandwiched by two outer rings, each composed of seven alpha subunits. The catalytic chamber with the active sites is on the inside of the barrel. Has a gated structure, the ends of the cylinder being occluded by the N-termini of the alpha-subunits. Is capped at one or both ends by the proteasome regulatory ATPase, PAN.

It is found in the cytoplasm. The enzyme catalyses Cleavage of peptide bonds with very broad specificity.. Its activity is regulated as follows. The formation of the proteasomal ATPase PAN-20S proteasome complex, via the docking of the C-termini of PAN into the intersubunit pockets in the alpha-rings, triggers opening of the gate for substrate entry. Interconversion between the open-gate and close-gate conformations leads to a dynamic regulation of the 20S proteasome proteolysis activity. Its function is as follows. Component of the proteasome core, a large protease complex with broad specificity involved in protein degradation. In Cenarchaeum symbiosum (strain A), this protein is Proteasome subunit beta 1.